A 429-amino-acid chain; its full sequence is Lysophosphatidic acid phosphatase type 6 (429 aa).

The transit peptide at 1 to 32 directs the protein to the mitochondrion; sequence MISRVFKLRMWAPVGVLTSLTYCLHQRRVALA. Residues 58-169 are substrate binding; that stretch reads RHGARSPLKP…VFIRSTNIYR (112 aa). His-59 (nucleophile) is an active-site residue. The Proton donor role is filled by Asp-336.

This sequence belongs to the histidine acid phosphatase family. In terms of assembly, monomer. As to expression, detected in brain (at protein level).

It localises to the mitochondrion. It catalyses the reaction a phosphate monoester + H2O = an alcohol + phosphate. It carries out the reaction 1-(9Z-octadecenoyl)-sn-glycero-3-phosphate + H2O = 1-(9Z-octadecenoyl)-sn-glycerol + phosphate. Hydrolyzes lysophosphatidic acid (LPA) containing a medium length fatty acid chain to the corresponding monoacylglycerol. Has highest activity with lysophosphatidic acid containing myristate (C14:0), monounsaturated oleate (C18:1) or palmitate (C16:0), and lower activity with C18:0 and C6:0 lysophosphatidic acid. In Bos taurus (Bovine), this protein is Lysophosphatidic acid phosphatase type 6 (ACP6).